Consider the following 347-residue polypeptide: HTH-type transcriptional regulator PhcA (347 aa).

Residues 1–61 (MVNVDTKLLV…IRVPHGLTPT (61 aa)) form the HTH lysR-type domain. The segment at residues 21 to 40 (ATYVAEKMHMTAPAVSHSLG) is a DNA-binding region (H-T-H motif). The interval 316–347 (PMHPPMLTDDSGKSGKTGKGDAEKEDESRLSV) is disordered. The span at 325-347 (DSGKSGKTGKGDAEKEDESRLSV) shows a compositional bias: basic and acidic residues.

The protein belongs to the LysR transcriptional regulatory family.

Regulates the transcription of one or more of the genes involved in virulence. The polypeptide is HTH-type transcriptional regulator PhcA (phcA) (Ralstonia nicotianae (strain ATCC BAA-1114 / GMI1000) (Ralstonia solanacearum)).